The chain runs to 906 residues: Catenin alpha-2 (906 aa).

Residues 866-880 (KKPLVKREKPEEYQT) are compositionally biased toward basic and acidic residues. Residues 866 to 892 (KKPLVKREKPEEYQTRVRRGSQKKHIS) are disordered. Residues 881 to 891 (RVRRGSQKKHI) show a composition bias toward basic residues.

The protein belongs to the vinculin/alpha-catenin family. In terms of assembly, interacts with CDH1 and CDH2. In terms of tissue distribution, mainly in the nervous system (at protein level).

The protein resides in the cell membrane. It is found in the cytoplasm. It localises to the cytoskeleton. Its subcellular location is the cell junction. The protein localises to the adherens junction. The protein resides in the cell projection. It is found in the axon. It localises to the nucleus. Its function is as follows. May function as a linker between cadherin adhesion receptors and the cytoskeleton to regulate cell-cell adhesion and differentiation in the nervous system. The chain is Catenin alpha-2 (CTNNA2) from Gallus gallus (Chicken).